A 273-amino-acid chain; its full sequence is Trypsin-6 (273 aa).

Residues methionine 1 to threonine 22 form the signal peptide. Residues glutamine 23 to arginine 46 constitute a propeptide, activation peptide. The Peptidase S1 domain occupies isoleucine 47–glycine 272. Cysteines 72 and 88 form a disulfide. Active-site charge relay system residues include histidine 87 and aspartate 132. Cystine bridges form between cysteine 197/cysteine 213 and cysteine 224/cysteine 248. Serine 228 serves as the catalytic Charge relay system.

The protein belongs to the peptidase S1 family. In terms of tissue distribution, expressed in the midgut. Expression levels drop a few hours after blood feeding and pick up again 28 hours later.

It is found in the secreted. It catalyses the reaction Preferential cleavage: Arg-|-Xaa, Lys-|-Xaa.. Constitutive trypsin that is expressed 2 days after emergence, coinciding with host seeking behavior of the female. The polypeptide is Trypsin-6 (TRYP6) (Anopheles gambiae (African malaria mosquito)).